Here is a 481-residue protein sequence, read N- to C-terminus: Proton-coupled amino acid transporter 2 (481 aa).

At 1-56 (MSVTKSAGSPQVAATVKLDLVSFPESAKKVQSQDPNPVNGSSSESSEKTKGITGFQ) the chain is on the cytoplasmic side. The tract at residues 26-49 (SAKKVQSQDPNPVNGSSSESSEKT) is disordered. Residues 29–40 (KVQSQDPNPVNG) are compositionally biased toward polar residues. A helical membrane pass occupies residues 57 to 77 (TLVHLVKGNMGTGILGLPLAV). Topologically, residues 78–79 (KN) are extracellular. Residues 80–100 (AGILMGPLSLLVMGLIACHCM) traverse the membrane as a helical segment. Topologically, residues 101 to 146 (HILVRCAQRFCHRLNKPFMDYGDTVMHGLASSPNTWLQSHAHWGRH) are cytoplasmic. The chain crosses the membrane as a helical span at residues 147–167 (AVSFFLIVTQLGFCCVYIVFL). Residues 168 to 195 (ADNLKQVVEAVNSTTISCHKNETVVLTP) lie on the Extracellular side of the membrane. A helical transmembrane segment spans residues 196–216 (TIDSRLYMLAFLPVLGLLVFI). Residues 217–220 (RNLR) lie on the Cytoplasmic side of the membrane. A helical membrane pass occupies residues 221 to 241 (VLTIFSLLANVSMLVSLVIIG). Residues 242 to 262 (QYIIQGIPDPSQLPLVASWKT) lie on the Extracellular side of the membrane. A helical membrane pass occupies residues 263-283 (YPLFFGTAIFSFESIGVVLPL). At 284–295 (ENKMKDARRFPT) the chain is on the cytoplasmic side. The chain crosses the membrane as a helical span at residues 296–316 (ILSLGMSIITTLYIAIGALGY). Topologically, residues 317–343 (LRFGDDIKASITLNLPNCWLYQSVKLL) are extracellular. Residues 344–364 (YVVGILCTHALQFYVPAEIII) form a helical membrane-spanning segment. At 365-377 (PLAVSQVSKRWAL) the chain is on the cytoplasmic side. A helical transmembrane segment spans residues 378 to 398 (PVDLSIRLALVCVTCMLAILI). Residues 399 to 402 (PRLD) lie on the Extracellular side of the membrane. The chain crosses the membrane as a helical span at residues 403–423 (LVLSLVGSVSSSALALIIPPL). The Cytoplasmic portion of the chain corresponds to 424–444 (LEVTTYYGEGMSPLTITKDAL). The chain crosses the membrane as a helical span at residues 445–465 (ISILGFMGFVVGTYQALDELI). The Extracellular portion of the chain corresponds to 466–481 (RSGNSLPLSNSTMFIQ).

It belongs to the amino acid/polyamine transporter 2 family. As to expression, expressed in lung and spleen, and to a lower extent in brain, heart, kidney and skeletal muscle.

Its subcellular location is the cell membrane. The protein resides in the endoplasmic reticulum membrane. The protein localises to the recycling endosome membrane. The catalysed reaction is glycine(in) + H(+)(in) = glycine(out) + H(+)(out). The enzyme catalyses L-alanine(in) + H(+)(in) = L-alanine(out) + H(+)(out). It catalyses the reaction D-alanine(in) + H(+)(in) = D-alanine(out) + H(+)(out). It carries out the reaction L-proline(out) + H(+)(out) = L-proline(in) + H(+)(in). The catalysed reaction is D-proline(out) + H(+)(out) = D-proline(in) + H(+)(in). The enzyme catalyses 4-hydroxy-L-proline(in) + H(+)(in) = 4-hydroxy-L-proline(out) + H(+)(out). It catalyses the reaction L-serine(in) + H(+)(in) = L-serine(out) + H(+)(out). It carries out the reaction D-serine(out) + H(+)(out) = D-serine(in) + H(+)(in). The catalysed reaction is beta-alanine(in) + H(+)(in) = beta-alanine(out) + H(+)(out). The enzyme catalyses 4-aminobutanoate(in) + H(+)(in) = 4-aminobutanoate(out) + H(+)(out). It catalyses the reaction sarcosine(in) + H(+)(in) = sarcosine(out) + H(+)(out). It carries out the reaction N,N-dimethylglycine(in) + H(+)(in) = N,N-dimethylglycine(out) + H(+)(out). With respect to regulation, inhibited by L- and D-pipecolic acid, nipecotic acid, isonipecotic acid, L- and D-cycloserine, and L-2-azetidine-carboxylate. Functionally, electrogenic proton/amino acid symporter with a high selectivity for the small side chains amino acids glycine, alanine and proline, where both L- and D-enantiomers are transported. Extension of the backbone length, as in beta-alanine and 4-aminobutanoate or methylation of the amino group, as in sarcosine and N,N-dimethylglycine, are also tolerated but decrease transport efficiency. A free carboxyl group is preferred. This Rattus norvegicus (Rat) protein is Proton-coupled amino acid transporter 2.